The chain runs to 1714 residues: Bifunctional glutamate/proline--tRNA ligase (1714 aa).

The segment at 166–191 (DAKVKRSPQSSKEQTPAKTGERKQEG) is disordered. The interval 170–754 (KRSPQSSKEQ…ASELDSQISQ (585 aa)) is glutamate--tRNA ligase. A compositionally biased stretch (polar residues) spans 172–182 (SPQSSKEQTPA). Positions 209-220 (PPEASGYLHIGH) match the 'HIGH' region motif. A 'KMSKS' region motif is present at residues 438–442 (VLSKR). Disordered regions lie at residues 718–754 (PTSG…QISQ), 791–817 (GKDW…ANDA), and 943–962 (GTTA…EKNP). 2 stretches are compositionally biased toward low complexity: residues 734-746 (KASS…GQAS) and 800-817 (SASS…ANDA). WHEP-TRS domains follow at residues 744–800 (QASE…GQTS), 816–872 (DAVS…GTVP), 890–946 (SVAQ…GTTA), 969–1025 (TVNT…GTVA), and 1044–1100 (DVGS…DAKS). The interval 755–1201 (QGDLVRDLKS…KPAKPVKKEP (447 aa)) is 6 X 57 AA approximate repeats. 2 disordered regions span residues 1093-1119 (DWTP…SPAK) and 1168-1210 (FPVA…GAVK). Basic and acidic residues predominate over residues 1094-1109 (WTPDAKSEPAVVKKEA). Serine 1110 carries the post-translational modification Phosphoserine. In terms of domain architecture, WHEP-TRS 6 spans 1118–1174 (AKDELTQEINAQGEKVRAAKGNKAAKEVIDAEVAKLLALKAKYKEVTGTDFPVAGRG). The segment covering 1172 to 1181 (GRGGGGGGGS) has biased composition (gly residues). Residues 1207–1714 (GAVKKQTRLG…KFYTLFGRSY (508 aa)) form a proline--tRNA ligase region. L-proline contacts are provided by residues 1322–1324 (TSE) and arginine 1353. Positions 1353, 1355, 1364, 1365, 1438, and 1441 each coordinate ATP. Glutamine 1438 is a binding site for Mg(2+). Residue histidine 1443 participates in L-proline binding. 2 residues coordinate ATP: threonine 1476 and arginine 1478. Zn(2+) contacts are provided by cysteine 1648, cysteine 1653, and cysteine 1695.

It in the N-terminal section; belongs to the class-I aminoacyl-tRNA synthetase family. Glutamate--tRNA ligase type 2 subfamily. In the C-terminal section; belongs to the class-II aminoacyl-tRNA synthetase family. Component of the multisynthetase complex which is comprised of a bifunctional glutamyl-prolyl-tRNA synthetase, the monospecific isoleucyl, leucyl, glutaminyl, methionyl, lysyl, arginyl, and aspartyl-tRNA synthetases as well as three auxiliary proteins, p18, p48 and p43.

It catalyses the reaction tRNA(Glu) + L-glutamate + ATP = L-glutamyl-tRNA(Glu) + AMP + diphosphate. The enzyme catalyses tRNA(Pro) + L-proline + ATP = L-prolyl-tRNA(Pro) + AMP + diphosphate. Functionally, catalyzes the attachment of both L-glutamate and L-proline to their cognate tRNAs in a two-step reaction where the amino acid is first activated by ATP to form a covalent intermediate with AMP. Subsequently, the activated amino acid is transferred to the acceptor end of the cognate tRNA to form L-glutamyl-tRNA(Glu) and L-prolyl-tRNA(Pro). In Drosophila melanogaster (Fruit fly), this protein is Bifunctional glutamate/proline--tRNA ligase.